We begin with the raw amino-acid sequence, 612 residues long: Dihydroxy-acid dehydratase (612 aa).

Asp-81 provides a ligand contact to Mg(2+). Cys-122 is a [2Fe-2S] cluster binding site. Residues Asp-123 and Lys-124 each coordinate Mg(2+). Lys-124 is modified (N6-carboxylysine). Position 195 (Cys-195) interacts with [2Fe-2S] cluster. Glu-491 serves as a coordination point for Mg(2+). Ser-517 functions as the Proton acceptor in the catalytic mechanism.

Belongs to the IlvD/Edd family. Homodimer. Requires [2Fe-2S] cluster as cofactor. It depends on Mg(2+) as a cofactor.

It carries out the reaction (2R)-2,3-dihydroxy-3-methylbutanoate = 3-methyl-2-oxobutanoate + H2O. The enzyme catalyses (2R,3R)-2,3-dihydroxy-3-methylpentanoate = (S)-3-methyl-2-oxopentanoate + H2O. Its pathway is amino-acid biosynthesis; L-isoleucine biosynthesis; L-isoleucine from 2-oxobutanoate: step 3/4. The protein operates within amino-acid biosynthesis; L-valine biosynthesis; L-valine from pyruvate: step 3/4. Functionally, functions in the biosynthesis of branched-chain amino acids. Catalyzes the dehydration of (2R,3R)-2,3-dihydroxy-3-methylpentanoate (2,3-dihydroxy-3-methylvalerate) into 2-oxo-3-methylpentanoate (2-oxo-3-methylvalerate) and of (2R)-2,3-dihydroxy-3-methylbutanoate (2,3-dihydroxyisovalerate) into 2-oxo-3-methylbutanoate (2-oxoisovalerate), the penultimate precursor to L-isoleucine and L-valine, respectively. The sequence is that of Dihydroxy-acid dehydratase from Psychromonas ingrahamii (strain DSM 17664 / CCUG 51855 / 37).